The sequence spans 379 residues: tRNA-specific 2-thiouridylase MnmA (379 aa).

Residues 9 to 16 (AMSGGVDS) and methionine 35 each bind ATP. The interval 94–96 (NPD) is interaction with target base in tRNA. Cysteine 99 serves as the catalytic Nucleophile. An intrachain disulfide couples cysteine 99 to cysteine 195. ATP is bound at residue glycine 123. An interaction with tRNA region spans residues 145–147 (KDQ). The active-site Cysteine persulfide intermediate is the cysteine 195. The segment at 307 to 308 (RY) is interaction with tRNA.

It belongs to the MnmA/TRMU family.

The protein localises to the cytoplasm. The catalysed reaction is S-sulfanyl-L-cysteinyl-[protein] + uridine(34) in tRNA + AH2 + ATP = 2-thiouridine(34) in tRNA + L-cysteinyl-[protein] + A + AMP + diphosphate + H(+). In terms of biological role, catalyzes the 2-thiolation of uridine at the wobble position (U34) of tRNA, leading to the formation of s(2)U34. The polypeptide is tRNA-specific 2-thiouridylase MnmA (Xylella fastidiosa (strain 9a5c)).